Consider the following 123-residue polypeptide: Small ribosomal subunit protein uS12 (123 aa).

Position 89 is a 3-methylthioaspartic acid (D89). Residues 101–123 (SLDTAGVKDRKQSRSKYGAKRPK) are disordered. Residues 113–123 (SRSKYGAKRPK) show a composition bias toward basic residues.

This sequence belongs to the universal ribosomal protein uS12 family. Part of the 30S ribosomal subunit. Contacts proteins S8 and S17. May interact with IF1 in the 30S initiation complex.

With S4 and S5 plays an important role in translational accuracy. Functionally, interacts with and stabilizes bases of the 16S rRNA that are involved in tRNA selection in the A site and with the mRNA backbone. Located at the interface of the 30S and 50S subunits, it traverses the body of the 30S subunit contacting proteins on the other side and probably holding the rRNA structure together. The combined cluster of proteins S8, S12 and S17 appears to hold together the shoulder and platform of the 30S subunit. In Laribacter hongkongensis (strain HLHK9), this protein is Small ribosomal subunit protein uS12.